A 317-amino-acid chain; its full sequence is MTELPLQFAEPDDDLERVRATLYSLDPDGDRTAGVLRDTLDQLYDGQRTGRWNFDQLHKTEKTHMGTLVEINLHREFQFGDGFETDYEIAGVQVDCKFSMSQGAWMLPPESIGHICLVIWASDQQCAWTAGLVKVIPQFLGTANRDLKRRLTPEGRAQVVKLWPDHGKLQENLLLHIPGDVRDQIFSAKSSRGNQHGQARVNELFRRVHGRLIGRAVIATVAQQDDFMKRVRGSGGARSILRPEGIIILGHQDNDPKVANDLGLPVPRKGQVVAARVVPADEGDQRQTAEIQGRRWAVAVPGDPIVEAPVVPRKSAE.

Homodimer.

The catalysed reaction is Endonucleolytic cleavage of DNA to give specific double-stranded fragments with terminal 5'-phosphates.. An E and P subtype restriction enzyme that recognizes the double-stranded unmethylated sequence 5'-GCCGGC-3' and cleaves after C-3. The protein is Type II restriction enzyme NaeI of Lentzea aerocolonigenes (Lechevalieria aerocolonigenes).